Here is a 95-residue protein sequence, read N- to C-terminus: Aspartyl/glutamyl-tRNA(Asn/Gln) amidotransferase subunit C (95 aa).

Belongs to the GatC family. Heterotrimer of A, B and C subunits.

The catalysed reaction is L-glutamyl-tRNA(Gln) + L-glutamine + ATP + H2O = L-glutaminyl-tRNA(Gln) + L-glutamate + ADP + phosphate + H(+). The enzyme catalyses L-aspartyl-tRNA(Asn) + L-glutamine + ATP + H2O = L-asparaginyl-tRNA(Asn) + L-glutamate + ADP + phosphate + 2 H(+). Its function is as follows. Allows the formation of correctly charged Asn-tRNA(Asn) or Gln-tRNA(Gln) through the transamidation of misacylated Asp-tRNA(Asn) or Glu-tRNA(Gln) in organisms which lack either or both of asparaginyl-tRNA or glutaminyl-tRNA synthetases. The reaction takes place in the presence of glutamine and ATP through an activated phospho-Asp-tRNA(Asn) or phospho-Glu-tRNA(Gln). This chain is Aspartyl/glutamyl-tRNA(Asn/Gln) amidotransferase subunit C, found in Bartonella bacilliformis (strain ATCC 35685 / KC583 / Herrer 020/F12,63).